The following is a 481-amino-acid chain: Probable glycine dehydrogenase (decarboxylating) subunit 2 (481 aa).

At Lys269 the chain carries N6-(pyridoxal phosphate)lysine.

Belongs to the GcvP family. C-terminal subunit subfamily. The glycine cleavage system is composed of four proteins: P, T, L and H. In this organism, the P 'protein' is a heterodimer of two subunits. The cofactor is pyridoxal 5'-phosphate.

It catalyses the reaction N(6)-[(R)-lipoyl]-L-lysyl-[glycine-cleavage complex H protein] + glycine + H(+) = N(6)-[(R)-S(8)-aminomethyldihydrolipoyl]-L-lysyl-[glycine-cleavage complex H protein] + CO2. The glycine cleavage system catalyzes the degradation of glycine. The P protein binds the alpha-amino group of glycine through its pyridoxal phosphate cofactor; CO(2) is released and the remaining methylamine moiety is then transferred to the lipoamide cofactor of the H protein. This is Probable glycine dehydrogenase (decarboxylating) subunit 2 from Chlorobium chlorochromatii (strain CaD3).